We begin with the raw amino-acid sequence, 149 residues long: Macrodomain Ter protein (149 aa).

Belongs to the MatP family. In terms of assembly, homodimer.

It is found in the cytoplasm. In terms of biological role, required for spatial organization of the terminus region of the chromosome (Ter macrodomain) during the cell cycle. Prevents early segregation of duplicated Ter macrodomains during cell division. Binds specifically to matS, which is a 13 bp signature motif repeated within the Ter macrodomain. The protein is Macrodomain Ter protein of Vibrio vulnificus (strain CMCP6).